A 94-amino-acid chain; its full sequence is ATP synthase subunit c (94 aa).

2 helical membrane passes run 15 to 35 (VSVG…WGLI) and 61 to 81 (GGLM…FIFA).

It belongs to the ATPase C chain family. F-type ATPases have 2 components, F(1) - the catalytic core - and F(0) - the membrane proton channel. F(1) has five subunits: alpha(3), beta(3), gamma(1), delta(1), epsilon(1). F(0) has three main subunits: a(1), b(2) and c(10-14). The alpha and beta chains form an alternating ring which encloses part of the gamma chain. F(1) is attached to F(0) by a central stalk formed by the gamma and epsilon chains, while a peripheral stalk is formed by the delta and b chains.

The protein localises to the cell inner membrane. Its function is as follows. F(1)F(0) ATP synthase produces ATP from ADP in the presence of a proton or sodium gradient. F-type ATPases consist of two structural domains, F(1) containing the extramembraneous catalytic core and F(0) containing the membrane proton channel, linked together by a central stalk and a peripheral stalk. During catalysis, ATP synthesis in the catalytic domain of F(1) is coupled via a rotary mechanism of the central stalk subunits to proton translocation. Key component of the F(0) channel; it plays a direct role in translocation across the membrane. A homomeric c-ring of between 10-14 subunits forms the central stalk rotor element with the F(1) delta and epsilon subunits. In Nitrosococcus oceani (strain ATCC 19707 / BCRC 17464 / JCM 30415 / NCIMB 11848 / C-107), this protein is ATP synthase subunit c.